An 830-amino-acid chain; its full sequence is ABC transporter G family member STR (830 aa).

The Cytoplasmic portion of the chain corresponds to 1 to 551; the sequence is MAKFKRTDTN…RTTLNVIRTP (551 aa). The 252-residue stretch at 46–297 folds into the ABC transporter domain; the sequence is LEFNNLSYSV…LAGFARPVPD (252 aa). 90–97 lines the ATP pocket; that stretch reads GPSGAGKS. 3 disordered regions span residues 333-356, 368-422, and 471-491; these read DQAA…PYAK, SHFS…SMQS, and SMSS…NKTP. Polar residues predominate over residues 368-378; that stretch reads SHFSTGNMNSQ. Residues 395-405 show a composition bias toward acidic residues; it reads DYEDDDDEDEF. Low complexity predominate over residues 471 to 483; the sequence is SMSSSQFSMTQQT. Residues 552–572 form a helical membrane-spanning segment; that stretch reads ELFLSREIVLTVMGLVLSSFF. Over 573–588 the chain is Extracellular; the sequence is KKLSHFDFKTINHLLN. Residues 589 to 609 traverse the membrane as a helical segment; that stretch reads FYIFTICLVFFSSNDAVPTFI. Topologically, residues 610–630 are cytoplasmic; it reads QERFIFIRETSHNAYRASSYV. The chain crosses the membrane as a helical span at residues 631-651; the sequence is ISSLIVYLPFFAIQGFTFAGI. The Extracellular portion of the chain corresponds to 652–661; that stretch reads TQYILHLNSS. Residue Asn659 is glycosylated (N-linked (GlcNAc...) asparagine). A helical membrane pass occupies residues 662 to 682; that stretch reads ILSFWLILYSSLVTSNAYVML. At 683–690 the chain is on the cytoplasmic side; it reads VSALVPSY. The helical transmembrane segment at 691-711 threads the bilayer; that stretch reads ITGYAVVIATTALFFLTCGFF. The Extracellular portion of the chain corresponds to 712 to 798; it reads LKRTQIPLVW…LFSMDIREEN (87 aa). 2 N-linked (GlcNAc...) asparagine glycosylation sites follow: Asn771 and Asn780. A helical transmembrane segment spans residues 799–819; the sequence is IWLDIVILLAWGVLYRLFFYV. Residues 820–830 are Cytoplasmic-facing; that stretch reads VLRFYSKNERK.

The protein belongs to the ABC transporter superfamily. ABCG family. Stunted arbuscule (STR) subfamily. In terms of assembly, heterodimerizes with STR2; the resulting transporter is located in the peri-arbuscular membrane.

It localises to the cell membrane. Together with STR2, required for arbuscule development in arbuscular mycorrhizal (AM) symbiosis. The protein is ABC transporter G family member STR of Petunia hybrida (Petunia).